A 468-amino-acid polypeptide reads, in one-letter code: UDP-N-acetylmuramate--L-alanine ligase (468 aa).

112–118 (GTHGKTT) is an ATP binding site.

This sequence belongs to the MurCDEF family.

Its subcellular location is the cytoplasm. It carries out the reaction UDP-N-acetyl-alpha-D-muramate + L-alanine + ATP = UDP-N-acetyl-alpha-D-muramoyl-L-alanine + ADP + phosphate + H(+). The protein operates within cell wall biogenesis; peptidoglycan biosynthesis. Functionally, cell wall formation. The polypeptide is UDP-N-acetylmuramate--L-alanine ligase (Bordetella bronchiseptica (strain ATCC BAA-588 / NCTC 13252 / RB50) (Alcaligenes bronchisepticus)).